The following is a 75-amino-acid chain: Cruzioseptin-6 (75 aa).

An N-terminal signal peptide occupies residues 1–22; that stretch reads MAYLKKSLFLVLFLGLVSLSIC. Residues 23–43 constitute a propeptide that is removed on maturation; sequence EEEKREEENEEEQEDDDQSEE. A disordered region spans residues 24 to 44; the sequence is EEKREEENEEEQEDDDQSEEK. The segment covering 30 to 41 has biased composition (acidic residues); it reads ENEEEQEDDDQS.

As to expression, expressed by the skin glands.

It is found in the secreted. Has antimicrobial activity. This is Cruzioseptin-6 from Cruziohyla calcarifer (Splendid leaf frog).